Here is a 418-residue protein sequence, read N- to C-terminus: Caveolae-associated protein 2 (418 aa).

Residues Met-1–Ser-42 form a disordered region. At Gly-2 the chain carries N-acetylglycine. The interaction with CAVIN1 stretch occupies residues Gly-2–Ala-168. 4 positions are modified to phosphoserine: Ser-27, Ser-35, Ser-37, and Ser-51. Coiled coils occupy residues Leu-61–Glu-87 and Arg-126–Arg-268. Residues Leu-62–Leu-100 are leucine-zipper. Thr-196 is subject to Phosphothreonine. 2 disordered regions span residues Val-200 to Lys-238 and Ile-262 to Gln-382. Phosphoserine occurs at positions 203, 204, and 218. A compositionally biased stretch (acidic residues) spans Ser-203–Ala-219. Positions Glu-220–Lys-238 are enriched in basic and acidic residues. A compositionally biased stretch (polar residues) spans Leu-275–Ser-287. Phosphoserine occurs at positions 283, 284, 287, 288, 293, and 296. Residues Arg-303–Glu-321 are compositionally biased toward basic and acidic residues. 4 positions are modified to phosphoserine: Ser-327, Ser-336, Ser-359, and Ser-363. Polar residues predominate over residues Arg-355–Asp-366. Thr-368 carries the post-translational modification Phosphothreonine. Positions Thr-368 to Pro-377 are enriched in acidic residues. At Tyr-388 the chain carries Phosphotyrosine. Ser-390 and Ser-396 each carry phosphoserine. The tract at residues Ser-396–Ala-418 is disordered.

It belongs to the CAVIN family. In terms of assembly, component of the CAVIN complex composed of CAVIN1, CAVIN2, CAVIN3 and CAVIN4. Binds to PRKCA in the presence of phosphatidylserine. Interacts with CAVIN4; this augments the transactivation of NPPA by CAVIN4. Interacts with CAVIN1. Interacts with CAV3. Post-translationally, the N-terminus is blocked. Heart, adipose tissue, lung and endothelial cells (at protein level). Highly expressed in kidney and expressed at lower levels in liver, spleen, thymus, stomach, intestine and uterus.

Its subcellular location is the cytoplasm. It is found in the cytosol. It localises to the membrane. The protein resides in the caveola. Plays an important role in caveolar biogenesis and morphology. Regulates caveolae morphology by inducing membrane curvature within caveolae. Plays a role in caveola formation in a tissue-specific manner. Required for the formation of caveolae in the lung and fat endothelia but not in the heart endothelia. Negatively regulates the size or stability of CAVIN complexes in the lung endothelial cells. May play a role in targeting PRKCA to caveolae. The chain is Caveolae-associated protein 2 (Cavin2) from Mus musculus (Mouse).